The following is a 571-amino-acid chain: MQRAAMYEEGPPPSYESVVSAAPVAAALGSPFDAPLDPPFVPPRYLRPTGGRNSIRYSELAPLFDTTRVYLVDNKSTDVASLNYQNDHSNFLTTVIQNNDYSPGEASTQTINLDDRSHWGGDLKTILHTNMPNVNEFMFTNKFKARVMVSRSLTKDKQVELKYEWVEFTLPEGNYSETMTIDLMNNAIVEHYLKVGRQNGVLESDIGVKFDTRNFRLGFDPVTGLVMPGVYTNEAFHPDIILLPGCGVDFTHSRLSNLLGIRKRQPFQEGFRITYDDLEGGNIPALLDVDAYQASLKDDTEQGGDGAGGGNNSGSGAEENSNAAAAAMQPVEDMNDHAIRGDTFATRAEEKRAEAEAAAEAAAPAAQPEVEKPQKKPVIKPLTEDSKKRSYNLISNDSTFTQYRSWYLAYNYGDPQTGIRSWTLLCTPDVTCGSEQVYWSLPDMMQDPVTFRSTSQISNFPVVGAELLPVHSKSFYNDQAVYSQLIRQFTSLTHVFNRFPENQILARPPAPTITTVSENVPALTDHGTLPLRNSIGGVQRVTITDARRRTCPYVYKALGIVSPRVLSSRTF.

The tract at residues 298 to 324 (DDTEQGGDGAGGGNNSGSGAEENSNAA) is disordered. A compositionally biased stretch (gly residues) spans 303–313 (GGDGAGGGNNS). Positions 314 to 324 (GSGAEENSNAA) are enriched in low complexity. The Cell attachment site signature appears at 340 to 342 (RGD). The segment at 347–383 (RAEEKRAEAEAAAEAAAPAAQPEVEKPQKKPVIKPLT) is disordered. The span at 356 to 368 (EAAAEAAAPAAQP) shows a compositional bias: low complexity. The residue at position 455 (Ser455) is a Phosphoserine; by host.

Belongs to the adenoviridae penton family. As to quaternary structure, interacts with the fiber protein (via N-terminal tail region). Interacts with the capsid vertex protein; this interaction binds the penton base to neighboring peripentonal hexons. Interacts (via the cell attachment site RGD) with host heterodimer ITGAV-ITGB5; this interaction promotes virus internalization. Interacts with host WWP1 and WWP2.

Its subcellular location is the virion. It is found in the host nucleus. Functionally, major capsid protein that self-associates to form penton base pentamers, each in the shape of a pentagon, situated at the 12 vertices of the pseudo T=25 capsid. Involved in virus secondary attachment to host cell after initial attachment by the fiber protein. Binds host integrin heterodimer ITGAV-ITGB5 (alphaV-beta5) thereby triggering clathrin-mediated endocytosis of virions. Mediates initial virus attachment to CXADR-negative cells. Binding to integrins ITGAV-ITGB5 also seems to induce macropinocytosis uptake of the virus. As the virus enters the host cell, penton proteins are shed concomitant with virion acidification in the endosome. In Homo sapiens (Human), this protein is Penton protein.